The following is a 49-amino-acid chain: Light-harvesting protein B-875 beta chain (49 aa).

The Cytoplasmic portion of the chain corresponds to 2-27; the sequence is ADKSDLGYTGLTDEQAQELHSVYMSG. A bacteriochlorophyll is bound by residues histidine 21 and histidine 39. A helical; Signal-anchor for type II membrane protein membrane pass occupies residues 28–45; it reads LWLFSAVAIVAHLAVYIW. The Periplasmic segment spans residues 46–49; that stretch reads RPWF.

This sequence belongs to the antenna complex beta subunit family. As to quaternary structure, the core complex is formed by different alpha and beta chains, binding bacteriochlorophyll molecules, and arranged most probably in tetrameric structures disposed around the reaction center. The non-pigmented gamma chains may constitute additional components.

The protein localises to the cell inner membrane. In terms of biological role, antenna complexes are light-harvesting systems, which transfer the excitation energy to the reaction centers. This is Light-harvesting protein B-875 beta chain (pufB) from Cereibacter sphaeroides (strain ATCC 17023 / DSM 158 / JCM 6121 / CCUG 31486 / LMG 2827 / NBRC 12203 / NCIMB 8253 / ATH 2.4.1.) (Rhodobacter sphaeroides).